The primary structure comprises 312 residues: Cobalamin biosynthesis protein CobD (312 aa).

4 helical membrane passes run 61–81 (IALLLAPFTLAAWALARLPLL), 83–103 (IIVPVALLYLAVGARSLAQHA), 152–172 (DAVFAALFWFLVLGAPGAVLY), and 292–312 (GMWLWAALSLAAAILIGAIHA).

Belongs to the CobD/CbiB family.

Its subcellular location is the cell membrane. Its pathway is cofactor biosynthesis; adenosylcobalamin biosynthesis. In terms of biological role, converts cobyric acid to cobinamide by the addition of aminopropanol on the F carboxylic group. The polypeptide is Cobalamin biosynthesis protein CobD (Chromobacterium violaceum (strain ATCC 12472 / DSM 30191 / JCM 1249 / CCUG 213 / NBRC 12614 / NCIMB 9131 / NCTC 9757 / MK)).